Reading from the N-terminus, the 252-residue chain is Small ribosomal subunit protein uS2 (252 aa).

This sequence belongs to the universal ribosomal protein uS2 family.

This Ruminiclostridium cellulolyticum (strain ATCC 35319 / DSM 5812 / JCM 6584 / H10) (Clostridium cellulolyticum) protein is Small ribosomal subunit protein uS2.